The following is an 83-amino-acid chain: Kappa-theraphotoxin-Cg2a (83 aa).

The first 21 residues, 1 to 21 (MKGSAFAIILGLVVLCACSFA), serve as a signal peptide directing secretion. A propeptide spanning residues 22-53 (EDEQDQFASPNELLRSMFLESRHELIPEVEGR) is cleaved from the precursor. Intrachain disulfides connect Cys-55–Cys-69, Cys-62–Cys-74, and Cys-68–Cys-78. Leu-82 carries the leucine amide modification.

Belongs to the neurotoxin 30 (phrixotoxin) family. Expressed by the venom gland.

Its subcellular location is the secreted. In terms of biological role, inhibits voltage-gated potassium channels of the subtype Kv4.1/KCND1 with high affinity and shows weak effects on Kv4.2/KCND2 and Kv2.1/KCNB1 subtypes. The toxin modifies the gating behavior of the channel and may interact with the S3-S4 extracellular loop. In Chilobrachys guangxiensis (Chinese earth tiger tarantula), this protein is Kappa-theraphotoxin-Cg2a.